The following is a 430-amino-acid chain: Glutamate-1-semialdehyde 2,1-aminomutase (430 aa).

Lysine 266 carries the post-translational modification N6-(pyridoxal phosphate)lysine.

It belongs to the class-III pyridoxal-phosphate-dependent aminotransferase family. HemL subfamily. As to quaternary structure, homodimer. Requires pyridoxal 5'-phosphate as cofactor.

It is found in the cytoplasm. It catalyses the reaction (S)-4-amino-5-oxopentanoate = 5-aminolevulinate. It functions in the pathway porphyrin-containing compound metabolism; protoporphyrin-IX biosynthesis; 5-aminolevulinate from L-glutamyl-tRNA(Glu): step 2/2. This is Glutamate-1-semialdehyde 2,1-aminomutase from Acidithiobacillus ferrooxidans (strain ATCC 23270 / DSM 14882 / CIP 104768 / NCIMB 8455) (Ferrobacillus ferrooxidans (strain ATCC 23270)).